The chain runs to 338 residues: Nodulation outer protein L (338 aa).

Residues 1-14 (MDINSTSPLNASPQ) show a composition bias toward polar residues. Disordered stretches follow at residues 1–48 (MDIN…LPQV), 85–158 (TRER…DLET), 187–209 (SPAP…PHAR), and 230–259 (PQAG…SSAG). The segment covering 85 to 97 (TRERSPHPSEQRP) has biased composition (basic and acidic residues). Residues 126-138 (VGPSRSGPSQAGL) are compositionally biased toward polar residues. Over residues 242–258 (SGPSQARPSHAWPSSSA) the composition is skewed to polar residues.

It localises to the secreted. Putative symbiotic effector that modulates nodulation in legumes. When delivered into the plant cell, modulates the activity of signal transduction pathways that culminate in activation of PR proteins. The polypeptide is Nodulation outer protein L (nopL) (Sinorhizobium fredii (strain NBRC 101917 / NGR234)).